The sequence spans 378 residues: Mannitol-1-phosphate 5-dehydrogenase (378 aa).

Position 4 to 15 (4 to 15 (SVHFGAGNIGRG)) interacts with NAD(+).

It belongs to the mannitol dehydrogenase family.

It carries out the reaction D-mannitol 1-phosphate + NAD(+) = beta-D-fructose 6-phosphate + NADH + H(+). This is Mannitol-1-phosphate 5-dehydrogenase from Streptococcus pneumoniae (strain 70585).